The sequence spans 310 residues: ADP-L-glycero-D-manno-heptose-6-epimerase (310 aa).

Residues 10–11 (FI), 31–32 (DN), lysine 38, lysine 53, 75–79 (EGACS), and asparagine 92 each bind NADP(+). Residue tyrosine 140 is the Proton acceptor of the active site. Lysine 144 contributes to the NADP(+) binding site. Residue asparagine 169 coordinates substrate. Residues valine 170 and lysine 178 each coordinate NADP(+). Catalysis depends on lysine 178, which acts as the Proton acceptor. Substrate is bound by residues serine 180, histidine 187, 201–204 (FSGS), arginine 209, and tyrosine 272.

The protein belongs to the NAD(P)-dependent epimerase/dehydratase family. HldD subfamily. Homopentamer. The cofactor is NADP(+).

The enzyme catalyses ADP-D-glycero-beta-D-manno-heptose = ADP-L-glycero-beta-D-manno-heptose. The protein operates within nucleotide-sugar biosynthesis; ADP-L-glycero-beta-D-manno-heptose biosynthesis; ADP-L-glycero-beta-D-manno-heptose from D-glycero-beta-D-manno-heptose 7-phosphate: step 4/4. Catalyzes the interconversion between ADP-D-glycero-beta-D-manno-heptose and ADP-L-glycero-beta-D-manno-heptose via an epimerization at carbon 6 of the heptose. The protein is ADP-L-glycero-D-manno-heptose-6-epimerase of Pectobacterium carotovorum subsp. carotovorum (strain PC1).